Reading from the N-terminus, the 425-residue chain is Enolase (425 aa).

Gln-162 contacts (2R)-2-phosphoglycerate. The active-site Proton donor is the Glu-204. Mg(2+)-binding residues include Asp-241, Glu-284, and Asp-311. (2R)-2-phosphoglycerate contacts are provided by Lys-336, Arg-365, Ser-366, and Lys-387. Residue Lys-336 is the Proton acceptor of the active site.

It belongs to the enolase family. Mg(2+) serves as cofactor.

It is found in the cytoplasm. The protein localises to the secreted. The protein resides in the cell surface. It catalyses the reaction (2R)-2-phosphoglycerate = phosphoenolpyruvate + H2O. It participates in carbohydrate degradation; glycolysis; pyruvate from D-glyceraldehyde 3-phosphate: step 4/5. Functionally, catalyzes the reversible conversion of 2-phosphoglycerate (2-PG) into phosphoenolpyruvate (PEP). It is essential for the degradation of carbohydrates via glycolysis. This is Enolase from Brucella anthropi (strain ATCC 49188 / DSM 6882 / CCUG 24695 / JCM 21032 / LMG 3331 / NBRC 15819 / NCTC 12168 / Alc 37) (Ochrobactrum anthropi).